Here is a 219-residue protein sequence, read N- to C-terminus: LexA repressor (219 aa).

Positions 28 to 48 (RAEIAAELGFRSANAAEEHLQ) form a DNA-binding region, H-T-H motif. Active-site for autocatalytic cleavage activity residues include serine 138 and lysine 175.

Belongs to the peptidase S24 family. As to quaternary structure, homodimer.

It catalyses the reaction Hydrolysis of Ala-|-Gly bond in repressor LexA.. In terms of biological role, represses a number of genes involved in the response to DNA damage (SOS response), including recA and lexA. In the presence of single-stranded DNA, RecA interacts with LexA causing an autocatalytic cleavage which disrupts the DNA-binding part of LexA, leading to derepression of the SOS regulon and eventually DNA repair. This Herminiimonas arsenicoxydans protein is LexA repressor.